Here is a 232-residue protein sequence, read N- to C-terminus: Large ribosomal subunit protein uL1 (232 aa).

It belongs to the universal ribosomal protein uL1 family. Part of the 50S ribosomal subunit.

In terms of biological role, binds directly to 23S rRNA. The L1 stalk is quite mobile in the ribosome, and is involved in E site tRNA release. Its function is as follows. Protein L1 is also a translational repressor protein, it controls the translation of the L11 operon by binding to its mRNA. The polypeptide is Large ribosomal subunit protein uL1 (Azorhizobium caulinodans (strain ATCC 43989 / DSM 5975 / JCM 20966 / LMG 6465 / NBRC 14845 / NCIMB 13405 / ORS 571)).